Reading from the N-terminus, the 172-residue chain is GTP-dependent dephospho-CoA kinase (172 aa).

Residues D40, V41, V42, D59, and E112 each contribute to the GTP site.

This sequence belongs to the GTP-dependent DPCK family.

The catalysed reaction is 3'-dephospho-CoA + GTP = GDP + CoA + H(+). The protein operates within cofactor biosynthesis; coenzyme A biosynthesis. Its function is as follows. Catalyzes the GTP-dependent phosphorylation of the 3'-hydroxyl group of dephosphocoenzyme A to form coenzyme A (CoA). The chain is GTP-dependent dephospho-CoA kinase from Methanospirillum hungatei JF-1 (strain ATCC 27890 / DSM 864 / NBRC 100397 / JF-1).